We begin with the raw amino-acid sequence, 219 residues long: MDRIVSSSHDRTSLLSTHKVLRNTYFLLSLTLAFSAITATASTVLMLPSPGLILTLVGMYGLMFLTYKTANKPTGIISAFAFTGFLGYILGPILNTYLSAGMGDVIAMALGGTALVFFCCSAYVLTTRKDMSFLGGMLMAGIVVVLIGMVANIFLQLPALHLAISAVFILISSGAILFETSNIIHGGETNYIRATVSLYVSLYNIFVSLLSILGFASRD.

Topologically, residues 1–22 (MDRIVSSSHDRTSLLSTHKVLR) are periplasmic. 2 helical membrane-spanning segments follow: residues 23–43 (NTYFLLSLTLAFSAITATAST) and 44–64 (VLMLPSPGLILTLVGMYGLMF). Topologically, residues 65-73 (LTYKTANKP) are periplasmic. The chain crosses the membrane as a helical span at residues 74–94 (TGIISAFAFTGFLGYILGPIL). Over 95–104 (NTYLSAGMGD) the chain is Cytoplasmic. A helical transmembrane segment spans residues 105 to 125 (VIAMALGGTALVFFCCSAYVL). Residues 126-133 (TTRKDMSF) lie on the Periplasmic side of the membrane. The chain crosses the membrane as a helical span at residues 134 to 154 (LGGMLMAGIVVVLIGMVANIF). Topologically, residues 155 to 157 (LQL) are cytoplasmic. Residues 158–178 (PALHLAISAVFILISSGAILF) traverse the membrane as a helical segment. The Periplasmic portion of the chain corresponds to 179 to 195 (ETSNIIHGGETNYIRAT). Residues 196–216 (VSLYVSLYNIFVSLLSILGFA) form a helical membrane-spanning segment. Over 217 to 219 (SRD) the chain is Cytoplasmic.

The protein belongs to the BI1 family.

It localises to the cell inner membrane. The protein is Inner membrane protein YccA (yccA) of Escherichia coli O6:H1 (strain CFT073 / ATCC 700928 / UPEC).